The following is a 354-amino-acid chain: Protein FAM181A (354 aa).

2 stretches are compositionally biased toward basic and acidic residues: residues 1–14 and 129–142; these read MPLEERRSSGERND and YLKRGSEDRPRRLL. Disordered stretches follow at residues 1-35, 117-160, and 172-193; these read MPLEERRSSGERNDAAPTNHRRPGEKRASTAKQVS, LPRG…CKEK, and AKEQLPQRQHPEAAQPGQVPMR.

The protein belongs to the FAM181 family.

The protein is Protein FAM181A (FAM181A) of Homo sapiens (Human).